Consider the following 372-residue polypeptide: Alanine racemase (372 aa).

The active-site Proton acceptor; specific for D-alanine is K33. K33 carries the post-translational modification N6-(pyridoxal phosphate)lysine. R131 is a substrate binding site. Y261 functions as the Proton acceptor; specific for L-alanine in the catalytic mechanism. M309 serves as a coordination point for substrate.

It belongs to the alanine racemase family. Pyridoxal 5'-phosphate is required as a cofactor.

The catalysed reaction is L-alanine = D-alanine. The protein operates within amino-acid biosynthesis; D-alanine biosynthesis; D-alanine from L-alanine: step 1/1. In terms of biological role, catalyzes the interconversion of L-alanine and D-alanine. May also act on other amino acids. The polypeptide is Alanine racemase (alr) (Salinispora tropica (strain ATCC BAA-916 / DSM 44818 / JCM 13857 / NBRC 105044 / CNB-440)).